Reading from the N-terminus, the 124-residue chain is MaFF-interacting protein (124 aa).

Residues 54 to 96 (LVSEVEELYKSITALREKLLQAEQSLRNLKDIHMSLEKDVTAM) are a coiled coil.

The protein belongs to the tektin family. In terms of assembly, interacts with MIS18A. Interacts (via its coiled-coil region) with MAFF. In terms of tissue distribution, strongly expressed in brain, kidney and ovary. Moderately expressed in liver, spleen, thymus, prostate, testis, small intestine and colon. Weakly expressed in heart, placenta, lung and leukocytes.

The protein localises to the cytoplasm. It localises to the nucleus. The protein resides in the nucleolus. Its function is as follows. Acts as a coactivator of MAFF transcriptional activity. Inhibits cell growth and colony-forming efficiency. This is MaFF-interacting protein (MAFIP) from Homo sapiens (Human).